The primary structure comprises 291 residues: 4-hydroxy-tetrahydrodipicolinate synthase (291 aa).

T47 is a pyruvate binding site. Catalysis depends on Y136, which acts as the Proton donor/acceptor. The active-site Schiff-base intermediate with substrate is K164. I206 lines the pyruvate pocket.

This sequence belongs to the DapA family. In terms of assembly, homotetramer; dimer of dimers.

The protein localises to the cytoplasm. It catalyses the reaction L-aspartate 4-semialdehyde + pyruvate = (2S,4S)-4-hydroxy-2,3,4,5-tetrahydrodipicolinate + H2O + H(+). It participates in amino-acid biosynthesis; L-lysine biosynthesis via DAP pathway; (S)-tetrahydrodipicolinate from L-aspartate: step 3/4. Its function is as follows. Catalyzes the condensation of (S)-aspartate-beta-semialdehyde [(S)-ASA] and pyruvate to 4-hydroxy-tetrahydrodipicolinate (HTPA). The protein is 4-hydroxy-tetrahydrodipicolinate synthase of Leuconostoc citreum (strain KM20).